The following is a 56-amino-acid chain: UPF0434 protein ECH_0194 (56 aa).

It belongs to the UPF0434 family.

This is UPF0434 protein ECH_0194 from Ehrlichia chaffeensis (strain ATCC CRL-10679 / Arkansas).